The chain runs to 79 residues: Small ribosomal subunit protein uS17 (79 aa).

Belongs to the universal ribosomal protein uS17 family. Part of the 30S ribosomal subunit.

Its function is as follows. One of the primary rRNA binding proteins, it binds specifically to the 5'-end of 16S ribosomal RNA. In Rhizobium etli (strain ATCC 51251 / DSM 11541 / JCM 21823 / NBRC 15573 / CFN 42), this protein is Small ribosomal subunit protein uS17.